A 306-amino-acid polypeptide reads, in one-letter code: Beta-lactamase 1 (306 aa).

An N-terminal signal peptide occupies residues 1 to 27 (MILKNKRMLKIGICVGILGLSITSLEA). The Acyl-ester intermediate role is filled by S91. The active-site Proton acceptor is E187. Position 253 to 255 (253 to 255 (KSG)) interacts with substrate.

This sequence belongs to the class-A beta-lactamase family.

It catalyses the reaction a beta-lactam + H2O = a substituted beta-amino acid. Functionally, this protein is a beta-lactamase with a substrate specificity for penicillins. The polypeptide is Beta-lactamase 1 (blaY) (Bacillus cereus).